The chain runs to 487 residues: 3-ketoacyl-CoA synthase 17 (487 aa).

Transmembrane regions (helical) follow at residues Leu-23–Val-43 and Ser-57–Ser-77. An FAE domain is found at Phe-74 to Leu-363. Active-site residues include Cys-218, His-297, His-382, His-386, His-415, and Asn-419.

The protein belongs to the thiolase-like superfamily. Chalcone/stilbene synthases family. As to expression, expressed in flowers.

It localises to the membrane. The enzyme catalyses a very-long-chain acyl-CoA + malonyl-CoA + H(+) = a very-long-chain 3-oxoacyl-CoA + CO2 + CoA. Its pathway is lipid metabolism; fatty acid biosynthesis. With respect to regulation, inhibited by K3 herbicides such as alachlor, allidochlor, anilofos, cafenstrole, fentrazamide and flufenacet. Strongly inhibited by metazachlor. Functionally, active on saturated acyl-CoAs up to C22. Mediates the synthesis of VLCFAs from 20 to 26 carbons in length (e.g. C20:1, C20, C24, C26). In Arabidopsis thaliana (Mouse-ear cress), this protein is 3-ketoacyl-CoA synthase 17.